The sequence spans 79 residues: Large ribosomal subunit protein uL24 (79 aa).

The protein belongs to the universal ribosomal protein uL24 family. Part of the 50S ribosomal subunit.

Functionally, one of two assembly initiator proteins, it binds directly to the 5'-end of the 23S rRNA, where it nucleates assembly of the 50S subunit. In terms of biological role, one of the proteins that surrounds the polypeptide exit tunnel on the outside of the subunit. The sequence is that of Large ribosomal subunit protein uL24 from Lactobacillus gasseri (strain ATCC 33323 / DSM 20243 / BCRC 14619 / CIP 102991 / JCM 1131 / KCTC 3163 / NCIMB 11718 / NCTC 13722 / AM63).